A 33-amino-acid chain; its full sequence is Natriuretic peptide NP2 (33 aa).

An intrachain disulfide couples Cys10 to Cys26.

As to expression, expressed by the venom gland.

It is found in the secreted. Its function is as follows. Snake venom natriuretic peptide that shows an increase in perfusion pressure, urinary flow and glomerular filtration rate. Reduces total and proximal tubular transport of sodium. In the aortic ring assay, causes a relaxant effect in endothelium-intact thoracic aortic rings precontracted with phenylephrine in the presence and absence of isatin, a natriuretic receptor antagonist. The chain is Natriuretic peptide NP2 from Crotalus durissus cascavella (Northeastern Brazilian rattlesnake).